Consider the following 130-residue polypeptide: Large ribosomal subunit protein bL17 (130 aa).

It belongs to the bacterial ribosomal protein bL17 family. As to quaternary structure, part of the 50S ribosomal subunit. Contacts protein L32.

The chain is Large ribosomal subunit protein bL17 from Paraburkholderia xenovorans (strain LB400).